We begin with the raw amino-acid sequence, 302 residues long: Urease accessory protein UreD 1 (302 aa).

The protein belongs to the UreD family. As to quaternary structure, ureD, UreF and UreG form a complex that acts as a GTP-hydrolysis-dependent molecular chaperone, activating the urease apoprotein by helping to assemble the nickel containing metallocenter of UreC. The UreE protein probably delivers the nickel.

The protein localises to the cytoplasm. Required for maturation of urease via the functional incorporation of the urease nickel metallocenter. This is Urease accessory protein UreD 1 from Psychrobacter cryohalolentis (strain ATCC BAA-1226 / DSM 17306 / VKM B-2378 / K5).